A 394-amino-acid chain; its full sequence is Serine palmitoyltransferase (394 aa).

Pyridoxal 5'-phosphate-binding positions include 111-112, serine 183, histidine 211, and threonine 239; that span reads GF. Lysine 242 bears the N6-(pyridoxal phosphate)lysine mark.

It belongs to the class-II pyridoxal-phosphate-dependent aminotransferase family. It depends on pyridoxal 5'-phosphate as a cofactor.

The catalysed reaction is L-serine + hexadecanoyl-CoA + H(+) = 3-oxosphinganine + CO2 + CoA. It participates in lipid metabolism; sphingolipid metabolism. Functionally, involved in de novo bacterial ceramide synthesis. Catalyzes the condensation of L-serine with palmitoyl-CoA (hexadecanoyl-CoA) to produce 3-oxosphinganine. Also capable of using alanine as substrate leading to the formation of 1-deoxysphinganine (1-deoxySa). Contributes to the levels of endogenous sphingolipids in its host. In Bacteroides ovatus (strain ATCC 8483 / DSM 1896 / JCM 5824 / BCRC 10623 / CCUG 4943 / NCTC 11153), this protein is Serine palmitoyltransferase.